Here is a 384-residue protein sequence, read N- to C-terminus: Probable protein phosphatase 2C 48 (384 aa).

One can recognise a PPM-type phosphatase domain in the interval 47–358 (ITGEFSMAVV…DDITVIVVFL (312 aa)). A Phosphoserine modification is found at S78. D89, G90, D290, and D349 together coordinate Mn(2+).

Belongs to the PP2C family. Requires Mg(2+) as cofactor. The cofactor is Mn(2+).

The enzyme catalyses O-phospho-L-seryl-[protein] + H2O = L-seryl-[protein] + phosphate. The catalysed reaction is O-phospho-L-threonyl-[protein] + H2O = L-threonyl-[protein] + phosphate. Its function is as follows. May dephosphorylate and repress plasma membrane H(+)-ATPases (PM H(+)-ATPases, e.g. AHA1 and AHA2), thus influencing negatively plant growth and fitness. In Arabidopsis thaliana (Mouse-ear cress), this protein is Probable protein phosphatase 2C 48.